The primary structure comprises 171 residues: MSSKRAKAKTTKKRPQSATSNVFAMFDQSQIQEFKEAFNMIDQNRDGFIDKEDLHDMLASLGKNPTDEXLEGMMNEAPGPINFTMFLTMFGEKLNGTDPEDVIRNAFACFDEEASGFIHEDHLRELLTTMGDRFTDEEVDEMYRERIDKKGNFNYVEFTRILKHGAKDKDD.

The segment covering 1–15 has biased composition (basic residues); it reads MSSKRAKAKTTKKRP. Positions 1–21 are disordered; that stretch reads MSSKRAKAKTTKKRPQSATSN. Serine 2 carries the N-acetylserine modification. A Phosphothreonine; by MLCK, CIT and ROCK2 modification is found at threonine 19. Serine 20 bears the Phosphoserine; by CDC42BP, CIT, MLCK, PAK1, ROCK1, ROCK2, DAPK1, DAPK2 and ZIPK/DAPK3 mark. EF-hand domains follow at residues 29–64 and 98–133; these read SQIQ…LGKN and DPED…MGDR. Aspartate 42, asparagine 44, aspartate 46, and aspartate 53 together coordinate Ca(2+).

As to quaternary structure, myosin is a hexamer of 2 heavy chains and 4 light chains: interacts with myosin heavy chain MYO19. Interacts with LUZP1; the interaction results in inhibition of phosphorylation of MYL9 by DAPK3. Post-translationally, phosphorylation increases the actin-activated myosin ATPase activity and thereby regulates the contractile activity. It is required to generate the driving force in the migration of the cells but not necessary for localization of myosin-2 at the leading edge. Phosphorylation is required for myotube formation. Phosphorylated by DAPK3; DAPK3-mediated phosphorylation is inhibited by LUZP1. Smooth muscle tissues and in some, but not all, nonmuscle cells.

The protein resides in the cytoplasm. Its subcellular location is the cytoskeleton. It localises to the cell cortex. Its function is as follows. Myosin regulatory subunit that plays an important role in regulation of both smooth muscle and nonmuscle cell contractile activity via its phosphorylation. Implicated in cytokinesis, receptor capping, and cell locomotion. In myoblasts, may regulate PIEZO1-dependent cortical actomyosin assembly involved in myotube formation. The chain is Myosin regulatory light polypeptide 9 (Myl9) from Rattus norvegicus (Rat).